The primary structure comprises 350 residues: UPF0284 protein MJ1598 (350 aa).

Belongs to the UPF0284 family.

This Methanocaldococcus jannaschii (strain ATCC 43067 / DSM 2661 / JAL-1 / JCM 10045 / NBRC 100440) (Methanococcus jannaschii) protein is UPF0284 protein MJ1598.